We begin with the raw amino-acid sequence, 139 residues long: Endoribonuclease YbeY (139 aa).

3 residues coordinate Zn(2+): His-105, His-109, and Asp-115.

Belongs to the endoribonuclease YbeY family. The cofactor is Zn(2+).

The protein resides in the cytoplasm. In terms of biological role, single strand-specific metallo-endoribonuclease involved in late-stage 70S ribosome quality control and in maturation of the 3' terminus of the 16S rRNA. The protein is Endoribonuclease YbeY of Flavobacterium johnsoniae (strain ATCC 17061 / DSM 2064 / JCM 8514 / BCRC 14874 / CCUG 350202 / NBRC 14942 / NCIMB 11054 / UW101) (Cytophaga johnsonae).